We begin with the raw amino-acid sequence, 364 residues long: DNA replication and repair protein RecF (364 aa).

ATP is bound at residue 30 to 37 (GENGSGKT).

This sequence belongs to the RecF family.

It is found in the cytoplasm. The RecF protein is involved in DNA metabolism; it is required for DNA replication and normal SOS inducibility. RecF binds preferentially to single-stranded, linear DNA. It also seems to bind ATP. This Xylella fastidiosa (strain M23) protein is DNA replication and repair protein RecF.